Here is a 333-residue protein sequence, read N- to C-terminus: Serine/threonine-protein phosphatase 4 catalytic subunit 1 (333 aa).

A disordered region spans residues 1-28 (MALACTDSANSTFSRVDSPTSGPSDQLT). Polar residues predominate over residues 7 to 27 (DSANSTFSRVDSPTSGPSDQL). Mn(2+)-binding residues include D79, H81, D107, and N139. The active-site Proton donor is the H140. The Mn(2+) site is built by H189 and H264. L333 bears the Leucine methyl ester mark.

It belongs to the PPP phosphatase family. PP-4 (PP-X) subfamily. In terms of assembly, serine/threonine-protein phosphatase 4 (PP4) occurs in different assemblies of the catalytic and one or more regulatory subunits. The regulatory subunits are likely to be ppfr-1, ppfr-2, ppfr-4 and smk-1. Interacts with mei-1. It depends on Mn(2+) as a cofactor. Post-translationally, methylation at the C-terminal Leu-333 is critical for interactions with regulatory subunits.

The protein resides in the cytoplasm. The protein localises to the cytoskeleton. It localises to the microtubule organizing center. Its subcellular location is the centrosome. The enzyme catalyses O-phospho-L-seryl-[protein] + H2O = L-seryl-[protein] + phosphate. It carries out the reaction O-phospho-L-threonyl-[protein] + H2O = L-threonyl-[protein] + phosphate. In terms of biological role, protein phosphatase which plays an essential role in meiosis and in early embryonic mitosis. During spermatocyte meiosis and the first embryonic mitosis, regulates centrosome maturation, and thus spindle formation, by recruiting some of the components of the pericentriolar material (PCM). During oocyte meiosis I, regulates meiotic chromosome dynamics including synapsis-independent chromosome pairing, restriction of synapsis to homologous chromosomes, programmed DNA double-strand break initiation and crossover formation resulting in chiasma formation. During oocyte meiosis II and probably together with regulatory subunit ppfr-1, may regulate microtubule severing by dephosphorylating and activating mei-1, a component of the katanin microtubule severing complex. This is Serine/threonine-protein phosphatase 4 catalytic subunit 1 from Caenorhabditis elegans.